Here is a 1181-residue protein sequence, read N- to C-terminus: Integrin alpha-2 (1181 aa).

An N-terminal signal peptide occupies residues 1–29 (MGPERTGAAPLPLLLVLALSQGILNCCLA). Residues 30 to 1132 (YNVGLPEAKI…KPDEKAEVPT (1103 aa)) are Extracellular-facing. 2 FG-GAP repeats span residues 34 to 92 (LPEA…TATC) and 101 to 161 (TSIP…LSAS). Cysteine 83 and cysteine 92 form a disulfide bridge. 3 N-linked (GlcNAc...) asparagine glycosylation sites follow: asparagine 105, asparagine 112, and asparagine 343. One can recognise a VWFA domain in the interval 188 to 365 (WDAVKNFLEK…TLGEQIFSIE (178 aa)). 5 FG-GAP repeats span residues 366-420 (GTVQ…LIFP), 423-475 (AFDQ…ENGN), 477-539 (TVIQ…ILGQ), 540-598 (HQFL…TIRT), and 602-664 (QKIL…FTPE). Asparagine 432, asparagine 460, and asparagine 475 each carry an N-linked (GlcNAc...) asparagine glycan. Positions 499, 501, 503, 507, 563, 565, 567, 571, 627, 629, 631, and 635 each coordinate Ca(2+). Disulfide bonds link cysteine 680–cysteine 737, cysteine 789–cysteine 795, cysteine 865–cysteine 876, cysteine 1019–cysteine 1050, and cysteine 1055–cysteine 1060. N-linked (GlcNAc...) asparagine glycosylation is present at asparagine 699. Residues asparagine 1057, asparagine 1074, and asparagine 1081 are each glycosylated (N-linked (GlcNAc...) asparagine). The chain crosses the membrane as a helical span at residues 1133–1154 (GVIIGSIIAGILLLLALVAILW). Residues 1155 to 1161 (KLGFFKR) are interaction with HPS5. Topologically, residues 1155 to 1181 (KLGFFKRKYEKMTKNPDEIDETTELSS) are cytoplasmic. The GFFKR motif motif lies at 1157–1161 (GFFKR).

The protein belongs to the integrin alpha chain family. In terms of assembly, heterodimer of an alpha and a beta subunit. Alpha-2 associates with beta-1. Interacts with HPS5 and RAB21. As to quaternary structure, (Microbial infection) Integrin ITGA2:ITGB1 interacts (via ITAG2 I-domain) with rotavirus A VP4 protein. (Microbial infection) Integrin ITGA2:ITGB1 interacts with human echoviruses 1 and 8 capsid proteins.

It is found in the membrane. Its function is as follows. Integrin alpha-2/beta-1 is a receptor for laminin, collagen, collagen C-propeptides, fibronectin and E-cadherin. It recognizes the proline-hydroxylated sequence G-F-P-G-E-R in collagen. It is responsible for adhesion of platelets and other cells to collagens, modulation of collagen and collagenase gene expression, force generation and organization of newly synthesized extracellular matrix. Functionally, (Microbial infection) Integrin ITGA2:ITGB1 acts as a receptor for Human rotavirus A. (Microbial infection) Integrin ITGA2:ITGB1 acts as a receptor for Human echoviruses 1 and 8. The sequence is that of Integrin alpha-2 (ITGA2) from Homo sapiens (Human).